Consider the following 602-residue polypeptide: Sensor histidine kinase AtsR (602 aa).

2 helical membrane passes run 11 to 31 (IIVALGSLWILGFAAWAFLLF) and 182 to 202 (AIVMLGGVLGVILGALFLLLF). One can recognise a Histidine kinase domain in the interval 242–461 (MVSHELRTPL…EFVVTLPVEL (220 aa)). At His-245 the chain carries Phosphohistidine; by autocatalysis. The 118-residue stretch at 484-601 (HALVVDDNEN…TLNGIVSRLR (118 aa)) folds into the Response regulatory domain. Asp-533 carries the 4-aspartylphosphate modification.

It is found in the cell inner membrane. It carries out the reaction ATP + protein L-histidine = ADP + protein N-phospho-L-histidine.. Member of a two-component regulatory system involved in control of gene expression; inhibits synthesis of (at least) the polyketide antibiotic thailandamide. Its two-component partner may be BTH_I0635. The chain is Sensor histidine kinase AtsR from Burkholderia thailandensis (strain ATCC 700388 / DSM 13276 / CCUG 48851 / CIP 106301 / E264).